The chain runs to 428 residues: MAKIVDIKGREVLDSRGNPTVEADVVLDNGIVGSACAPSGASTGSREALELRDGDKSRYMGKGVLKAVANINGPIRDLLLGKDPVDQKALDHAMIKLDGTENKASLGANAILAVSLAAAKAAAQDQDLPLYAHIANLNGTPGVYSMPVPMMNIINGGEHADNNIDIQEFMIQPVGAKTFAEGLRWGTEIFHHLKAVLKARGLNTAVGDEGGFAPNLASNKEALDAIAEAVANAGYTLGTDVTLALDCAASEFYKNGKYKLSEEGEYSSAEFAEYLAELTRKHPIISIEDGLDESDWDGWKVLTDKIGEKVQLVGDDLFVTNTKILKEGIDKKIANSILIKFNQIGSLTETLEAIQMAKAAGYTAIISHRSGETEDSTIADLAVGTSAGQIKTGSLCRSDRVSKYNQLLRIEEQLGSKAAYRGRAEFRG.

Gln167 lines the (2R)-2-phosphoglycerate pocket. Residue Glu209 is the Proton donor of the active site. Asp246, Glu288, and Asp315 together coordinate Mg(2+). (2R)-2-phosphoglycerate contacts are provided by Lys340, Arg369, Ser370, and Lys391. Lys340 acts as the Proton acceptor in catalysis.

It belongs to the enolase family. As to quaternary structure, component of the RNA degradosome, a multiprotein complex involved in RNA processing and mRNA degradation. Mg(2+) is required as a cofactor.

It is found in the cytoplasm. The protein resides in the secreted. It localises to the cell surface. It catalyses the reaction (2R)-2-phosphoglycerate = phosphoenolpyruvate + H2O. It participates in carbohydrate degradation; glycolysis; pyruvate from D-glyceraldehyde 3-phosphate: step 4/5. Its function is as follows. Catalyzes the reversible conversion of 2-phosphoglycerate (2-PG) into phosphoenolpyruvate (PEP). It is essential for the degradation of carbohydrates via glycolysis. In Pseudomonas savastanoi pv. phaseolicola (strain 1448A / Race 6) (Pseudomonas syringae pv. phaseolicola (strain 1448A / Race 6)), this protein is Enolase.